We begin with the raw amino-acid sequence, 153 residues long: Superoxide dismutase [Cu-Zn] (153 aa).

Positions 45, 47, and 62 each coordinate Cu cation. A disulfide bridge links Cys56 with Cys145. Zn(2+)-binding residues include His62, His70, His79, and Asp82. His119 contacts Cu cation.

The protein belongs to the Cu-Zn superoxide dismutase family. As to quaternary structure, homodimer. It depends on Cu cation as a cofactor. Requires Zn(2+) as cofactor.

It is found in the cytoplasm. It catalyses the reaction 2 superoxide + 2 H(+) = H2O2 + O2. Destroys radicals which are normally produced within the cells and which are toxic to biological systems. This Drosophila erecta (Fruit fly) protein is Superoxide dismutase [Cu-Zn].